A 533-amino-acid chain; its full sequence is 2-isopropylmalate synthase (533 aa).

Residues 8-270 enclose the Pyruvate carboxyltransferase domain; sequence VIIFDTTLRD…YFNPFLGRPA (263 aa). Asp-17, His-209, His-211, and Asn-245 together coordinate Mn(2+). The segment at 409–533 is regulatory domain; the sequence is RLELVQVSCG…KEKTPEMLQV (125 aa).

Belongs to the alpha-IPM synthase/homocitrate synthase family. LeuA type 1 subfamily. As to quaternary structure, homodimer. The cofactor is Mn(2+).

It is found in the cytoplasm. The enzyme catalyses 3-methyl-2-oxobutanoate + acetyl-CoA + H2O = (2S)-2-isopropylmalate + CoA + H(+). Its pathway is amino-acid biosynthesis; L-leucine biosynthesis; L-leucine from 3-methyl-2-oxobutanoate: step 1/4. Functionally, catalyzes the condensation of the acetyl group of acetyl-CoA with 3-methyl-2-oxobutanoate (2-ketoisovalerate) to form 3-carboxy-3-hydroxy-4-methylpentanoate (2-isopropylmalate). This chain is 2-isopropylmalate synthase, found in Microcystis aeruginosa.